The primary structure comprises 137 residues: Putative transcription elongation factor S-II-like protein 055R (137 aa).

The segment at 85–136 (DFITCPYEVSEGVLRCGKCDCTKILWFSKQTRSMDEPTTIFASCSNCKTRWT) adopts a TFIIS-type zinc-finger fold. Residues cysteine 89, cysteine 103, cysteine 128, and cysteine 131 each coordinate Zn(2+).

The protein belongs to the IIV-6 349L family.

The chain is Putative transcription elongation factor S-II-like protein 055R from Aedes vexans (Inland floodwater mosquito).